The chain runs to 31 residues: Cytochrome b6-f complex subunit 6 (31 aa).

Residues 4–24 (ITSYFGFLLAALTITSALFIG) traverse the membrane as a helical segment.

This sequence belongs to the PetL family. In terms of assembly, the 4 large subunits of the cytochrome b6-f complex are cytochrome b6, subunit IV (17 kDa polypeptide, PetD), cytochrome f and the Rieske protein, while the 4 small subunits are PetG, PetL, PetM and PetN. The complex functions as a dimer.

It localises to the plastid. Its subcellular location is the chloroplast thylakoid membrane. In terms of biological role, component of the cytochrome b6-f complex, which mediates electron transfer between photosystem II (PSII) and photosystem I (PSI), cyclic electron flow around PSI, and state transitions. PetL is important for photoautotrophic growth as well as for electron transfer efficiency and stability of the cytochrome b6-f complex. The chain is Cytochrome b6-f complex subunit 6 from Coffea arabica (Arabian coffee).